The chain runs to 198 residues: Glycerol-3-phosphate acyltransferase (198 aa).

The next 5 membrane-spanning stretches (helical) occupy residues 2 to 22, 53 to 73, 79 to 99, 113 to 133, and 152 to 172; these read IIDL…FGVL, LGFI…VIAT, PFMY…SCFL, VLIP…TFFI, and IILF…IMAL.

It belongs to the PlsY family. Probably interacts with PlsX.

Its subcellular location is the cell membrane. It carries out the reaction an acyl phosphate + sn-glycerol 3-phosphate = a 1-acyl-sn-glycero-3-phosphate + phosphate. The protein operates within lipid metabolism; phospholipid metabolism. Its function is as follows. Catalyzes the transfer of an acyl group from acyl-phosphate (acyl-PO(4)) to glycerol-3-phosphate (G3P) to form lysophosphatidic acid (LPA). This enzyme utilizes acyl-phosphate as fatty acyl donor, but not acyl-CoA or acyl-ACP. This is Glycerol-3-phosphate acyltransferase from Lawsonia intracellularis (strain PHE/MN1-00).